The sequence spans 469 residues: Glutamate--tRNA ligase (469 aa).

Residues 11 to 21 (PSPTGFIHLGN) carry the 'HIGH' region motif. The short motif at 243–247 (KMSKR) is the 'KMSKS' region element. K246 provides a ligand contact to ATP.

The protein belongs to the class-I aminoacyl-tRNA synthetase family. Glutamate--tRNA ligase type 1 subfamily. As to quaternary structure, monomer.

The protein localises to the cytoplasm. It catalyses the reaction tRNA(Glu) + L-glutamate + ATP = L-glutamyl-tRNA(Glu) + AMP + diphosphate. In terms of biological role, catalyzes the attachment of glutamate to tRNA(Glu) in a two-step reaction: glutamate is first activated by ATP to form Glu-AMP and then transferred to the acceptor end of tRNA(Glu). In Burkholderia cenocepacia (strain ATCC BAA-245 / DSM 16553 / LMG 16656 / NCTC 13227 / J2315 / CF5610) (Burkholderia cepacia (strain J2315)), this protein is Glutamate--tRNA ligase.